The following is a 648-amino-acid chain: MTEEIKNLQAQDYDASQIQVLEGLEAVRMRPGMYIGSTSKEGLHHLVWEIVDNSIDEALAGFASHIQVFIEPDDSITVVDDGRGIPVDIQEKTGRPAVETVFTVLHAGGKFGGGGYKVSGGLHGVGSSVVNALSTQLDVHVHKNGKIHYQEYRRGHVVADLEIVGDTDKTGTTVHFTPDPKIFTETTIFDFDKLNKRIQELAFLNRGLQISITDKRQGLEQTKHYHYEGGIASYVEYINENKDVIFDTPIYTDGEMDDITVEVAMQYTTGYHENVMSFANNIHTHEGGTHEQGFRTALTRVINDYARKNKLLKDNEDNLTGEDVREGLTAVISVKHPNPQFEGQTKTKLGNSEVVKITNRLFSEAFSDFLMENPQIAKRIVEKGILAAKARVAAKRAREVTRKKSGLEISNLPGKLADCSSNNPAETELFIVEGDSAGGSAKSGRNREFQAILPIRGKILNVEKASMDKILANEEIRSLFTAMGTGFGAEFDVSKARYQKLVLMTDADVDGAHIRTLLLTLIYRYMKPILEAGYVYIAQPPIYGVKVGSEIKEYIQPGADQEIKLQEALARYSEGRTKPTIQRYKGLGEMDDHQLWETTMDPEHRLMARVSVDDAAEADKIFDMLMGDRVEPRREFIEENAVYSTLDV.

The Toprim domain maps to 427 to 541 (TELFIVEGDS…AGYVYIAQPP (115 aa)). Mg(2+) is bound by residues E433, D506, and D508.

It belongs to the type II topoisomerase GyrB family. In terms of assembly, heterotetramer, composed of two GyrA and two GyrB chains. In the heterotetramer, GyrA contains the active site tyrosine that forms a transient covalent intermediate with DNA, while GyrB binds cofactors and catalyzes ATP hydrolysis. Mg(2+) is required as a cofactor. It depends on Mn(2+) as a cofactor. The cofactor is Ca(2+).

The protein resides in the cytoplasm. It catalyses the reaction ATP-dependent breakage, passage and rejoining of double-stranded DNA.. Functionally, a type II topoisomerase that negatively supercoils closed circular double-stranded (ds) DNA in an ATP-dependent manner to modulate DNA topology and maintain chromosomes in an underwound state. Negative supercoiling favors strand separation, and DNA replication, transcription, recombination and repair, all of which involve strand separation. Also able to catalyze the interconversion of other topological isomers of dsDNA rings, including catenanes and knotted rings. Type II topoisomerases break and join 2 DNA strands simultaneously in an ATP-dependent manner. In Streptococcus pneumoniae serotype 4 (strain ATCC BAA-334 / TIGR4), this protein is DNA gyrase subunit B.